Reading from the N-terminus, the 479-residue chain is NADH-quinone oxidoreductase subunit N 2 (479 aa).

Helical transmembrane passes span 4–24 (FVSF…FVVT), 43–63 (GVLV…SGAY), 67–87 (AFSQ…GILS), 99–119 (PEYF…VSSI), 121–141 (VITL…MVAM), 159–179 (IMFG…LYGL), 201–221 (AVTG…VFPF), 239–259 (LIAS…VSLA), 267–287 (ATLL…IALV), 294–314 (LLGF…VAMD), 318–338 (FASA…CFVV), 364–384 (LAVT…FVGF), 401–421 (ALVV…LQIV), and 444–464 (ALCV…AFTI).

Belongs to the complex I subunit 2 family. As to quaternary structure, NDH-1 is composed of 14 different subunits. Subunits NuoA, H, J, K, L, M, N constitute the membrane sector of the complex.

It localises to the cell inner membrane. The catalysed reaction is a quinone + NADH + 5 H(+)(in) = a quinol + NAD(+) + 4 H(+)(out). NDH-1 shuttles electrons from NADH, via FMN and iron-sulfur (Fe-S) centers, to quinones in the respiratory chain. The immediate electron acceptor for the enzyme in this species is believed to be ubiquinone. Couples the redox reaction to proton translocation (for every two electrons transferred, four hydrogen ions are translocated across the cytoplasmic membrane), and thus conserves the redox energy in a proton gradient. In Opitutus terrae (strain DSM 11246 / JCM 15787 / PB90-1), this protein is NADH-quinone oxidoreductase subunit N 2.